The chain runs to 359 residues: Squamosa promoter-binding-like protein 13A (359 aa).

The tract at residues 75 to 94 is disordered; it reads AKPEGSRSSSSKRTRGNGVG. The SBP-type zinc-finger motif lies at 98-175; sequence MPICLVDGCD…DGHNRRRRKP (78 aa). 8 residues coordinate Zn(2+): Cys101, Cys106, Cys123, His126, Cys142, Cys145, His149, and Cys161. A Bipartite nuclear localization signal motif is present at residues 158-174; sequence KRSCRKRLDGHNRRRRK.

The cofactor is Zn(2+).

The protein localises to the nucleus. Trans-acting factor that binds specifically to the consensus nucleotide sequence 5'-TNCGTACAA-3'. In Arabidopsis thaliana (Mouse-ear cress), this protein is Squamosa promoter-binding-like protein 13A (SPL13A).